We begin with the raw amino-acid sequence, 124 residues long: MPTIQQLVRKGRRDKISKVKTAALKGSPQRRGVCTRVYTTTPKKPNSALRKVARVKLTSQVEVTAYIPGEGHNLQEHSMVLVRGGRVKDLPGVRYKIIRGSLDTQGVKNRKQARSRYGAKKEKG.

Positions 105–124 (QGVKNRKQARSRYGAKKEKG) are disordered. A compositionally biased stretch (basic residues) spans 108–118 (KNRKQARSRYG).

The protein belongs to the universal ribosomal protein uS12 family. Part of the 30S ribosomal subunit. Contacts proteins S8 and S17. May interact with IF1 in the 30S initiation complex.

With S4 and S5 plays an important role in translational accuracy. Functionally, interacts with and stabilizes bases of the 16S rRNA that are involved in tRNA selection in the A site and with the mRNA backbone. Located at the interface of the 30S and 50S subunits, it traverses the body of the 30S subunit contacting proteins on the other side and probably holding the rRNA structure together. The combined cluster of proteins S8, S12 and S17 appears to hold together the shoulder and platform of the 30S subunit. This Mycobacterium bovis (strain ATCC BAA-935 / AF2122/97) protein is Small ribosomal subunit protein uS12 (rpsL).